The sequence spans 455 residues: Notoamide E oxidase notB' (455 aa).

Residues 11 to 31 traverse the membrane as a helical segment; that stretch reads PAILSPADLTVIIVGLGIAGL. Residues Glu48 and Gly61 each contribute to the FAD site. Residue Asn75 is glycosylated (N-linked (GlcNAc...) asparagine). Arg121 is an FAD binding site. Active-site residues include Arg199 and Tyr229. Positions 324 and 337 each coordinate FAD.

The protein belongs to the paxM FAD-dependent monooxygenase family. FAD serves as cofactor.

Its subcellular location is the membrane. It carries out the reaction notoamide E + NADPH + O2 + H(+) = notoamide C + NADP(+) + H2O. It catalyses the reaction notoamide E + NADPH + O2 + H(+) = notoamide D + NADP(+) + H2O. Its pathway is alkaloid biosynthesis. FAD-dependent monooxygenase; part of the gene cluster that mediates the biosynthesis of notoamide, a fungal indole alkaloid that belongs to a family of natural products containing a characteristic bicyclo[2.2.2]diazaoctane core. The first step of notoamide biosynthesis involves coupling of L-proline and L-tryptophan by the bimodular NRPS notE', to produce cyclo-L-tryptophan-L-proline called brevianamide F. The reverse prenyltransferase notF' then acts as a deoxybrevianamide E synthase and converts brevianamide F to deoxybrevianamide E via reverse prenylation at C-2 of the indole ring leading to the bicyclo[2.2.2]diazaoctane core. Deoxybrevianamide E is further hydroxylated at C-6 of the indole ring, likely catalyzed by the cytochrome P450 monooxygenase notG', to yield 6-hydroxy-deoxybrevianamide E. 6-hydroxy-deoxybrevianamide E is a specific substrate of the prenyltransferase notC' for normal prenylation at C-7 to produce 6-hydroxy-7-prenyl-deoxybrevianamide, also called notoamide S. As the proposed pivotal branching point in notoamide biosynthesis, notoamide S can be diverted to notoamide E through an oxidative pyran ring closure putatively catalyzed by either notH' cytochrome P450 monooxygenase or the notD' FAD-linked oxidoreductase. This step would be followed by an indole 2,3-epoxidation-initiated pinacol-like rearrangement catalyzed by the notB' FAD-dependent monooxygenase leading to the formation of notoamide C and notoamide D. On the other hand notoamide S is converted to notoamide T by notH' (or notD'), a bifunctional oxidase that also functions as the intramolecular Diels-Alderase responsible for generation of (-)-notoamide T. To generate antipodal (+)-notoaminide T, notH (or notD) in Aspergillus strain MF297-2 is expected to catalyze a Diels-Alder reaction leading to the opposite stereochemistry. The remaining oxidoreductase notD' (or notH') likely catalyzes the oxidative pyran ring formation to yield (-)-stephacidin A. The FAD-dependent monooxygenase notI' is highly similar to notB' and is predicted to catalyze a similar conversion from (-)-stephacidin A to (+)-notoamide B via the 2,3-epoxidation of (-)-stephacidin A followed by a pinacol-type rearrangement. Finally, it remains unclear which enzyme could be responsible for the final hydroxylation steps leading to notoamide A and sclerotiamide. This is Notoamide E oxidase notB' from Aspergillus versicolor.